Consider the following 101-residue polypeptide: Small ribosomal subunit protein uS14 (101 aa).

Positions 1 to 11 (MAKKSAIETNE) are enriched in basic and acidic residues. A disordered region spans residues 1–20 (MAKKSAIETNERRRKLATGH).

It belongs to the universal ribosomal protein uS14 family. Part of the 30S ribosomal subunit. Contacts proteins S3 and S10.

Functionally, binds 16S rRNA, required for the assembly of 30S particles and may also be responsible for determining the conformation of the 16S rRNA at the A site. The protein is Small ribosomal subunit protein uS14 of Xanthobacter autotrophicus (strain ATCC BAA-1158 / Py2).